We begin with the raw amino-acid sequence, 250 residues long: Entry-fusion complex associated protein OPG095 (250 aa).

Gly-2 carries the N-myristoyl glycine; by host lipid modification. Residues 2–12 are targeting to MV membrane; that stretch reads GAAASIQTTVN. Residues 2–183 are Virion surface-facing; the sequence is GAAASIQTTV…IAPRQVAGTG (182 aa). 3 cysteine pairs are disulfide-bonded: Cys-34–Cys-57, Cys-49–Cys-136, and Cys-116–Cys-158. A helical membrane pass occupies residues 184-204; the sequence is VQFYMIVIGVIILAALFMYYA. At 205–250 the chain is on the intravirion side; the sequence is KRMLFTSTNDKIKLILANKENVHWTTYMDTFFRTSPMVIATTDIQN.

Belongs to the orthopoxvirus OPG095 family. As to quaternary structure, component of the entry fusion complex (EFC) composed of OPG053, OPG076, OPG086, OPG094, OPG095, OPG099, OPG107, OPG143, OPG104, OPG147 and OPG155. Except for OPG095 and OPG053, each of the EFC proteins is required for assembly or stability of the complex. Myristoylated. In terms of processing, disulfid bonds are oxidized in the cytoplasm by OPG088 protein. Post-translationally, unglycosylated because produced in viral factories instead of the classic ER -Golgi route.

Its subcellular location is the virion membrane. Functionally, component of the entry fusion complex (EFC), which consists of 11 proteins. During cell infection, this complex mediates entry of the virion core into the host cytoplasm by a two-step mechanism consisting of lipid mixing of the viral and cellular membranes and subsequent pore formation. This Variola virus (isolate Human/India/Ind3/1967) (VARV) protein is Entry-fusion complex associated protein OPG095 (OPG099).